We begin with the raw amino-acid sequence, 453 residues long: Ribulose bisphosphate carboxylase large chain (453 aa).

Positions 1–2 (MS) are excised as a propeptide. Pro3 carries the post-translational modification N-acetylproline. Lys14 carries the post-translational modification N6,N6,N6-trimethyllysine. Substrate-binding residues include Asn123 and Thr173. The active-site Proton acceptor is the Lys175. A substrate-binding site is contributed by Lys177. Residues Lys201, Asp203, and Glu204 each contribute to the Mg(2+) site. Lys201 carries the N6-carboxylysine modification. His294 acts as the Proton acceptor in catalysis. 3 residues coordinate substrate: Arg295, His327, and Ser379.

The protein belongs to the RuBisCO large chain family. Type I subfamily. Heterohexadecamer of 8 large chains and 8 small chains; disulfide-linked. The disulfide link is formed within the large subunit homodimers. Mg(2+) is required as a cofactor. The disulfide bond which can form in the large chain dimeric partners within the hexadecamer appears to be associated with oxidative stress and protein turnover.

It is found in the plastid. Its subcellular location is the chloroplast. It catalyses the reaction 2 (2R)-3-phosphoglycerate + 2 H(+) = D-ribulose 1,5-bisphosphate + CO2 + H2O. The enzyme catalyses D-ribulose 1,5-bisphosphate + O2 = 2-phosphoglycolate + (2R)-3-phosphoglycerate + 2 H(+). In terms of biological role, ruBisCO catalyzes two reactions: the carboxylation of D-ribulose 1,5-bisphosphate, the primary event in carbon dioxide fixation, as well as the oxidative fragmentation of the pentose substrate in the photorespiration process. Both reactions occur simultaneously and in competition at the same active site. This is Ribulose bisphosphate carboxylase large chain from Galium parisiense (Wall bedstraw).